We begin with the raw amino-acid sequence, 226 residues long: Enolase-phosphatase E1 (226 aa).

Belongs to the HAD-like hydrolase superfamily. MasA/MtnC family. In terms of assembly, monomer. Requires Mg(2+) as cofactor.

The enzyme catalyses 5-methylsulfanyl-2,3-dioxopentyl phosphate + H2O = 1,2-dihydroxy-5-(methylsulfanyl)pent-1-en-3-one + phosphate. It participates in amino-acid biosynthesis; L-methionine biosynthesis via salvage pathway; L-methionine from S-methyl-5-thio-alpha-D-ribose 1-phosphate: step 3/6. It functions in the pathway amino-acid biosynthesis; L-methionine biosynthesis via salvage pathway; L-methionine from S-methyl-5-thio-alpha-D-ribose 1-phosphate: step 4/6. Bifunctional enzyme that catalyzes the enolization of 2,3-diketo-5-methylthiopentyl-1-phosphate (DK-MTP-1-P) into the intermediate 2-hydroxy-3-keto-5-methylthiopentenyl-1-phosphate (HK-MTPenyl-1-P), which is then dephosphorylated to form the acireductone 1,2-dihydroxy-3-keto-5-methylthiopentene (DHK-MTPene). This chain is Enolase-phosphatase E1, found in Shewanella amazonensis (strain ATCC BAA-1098 / SB2B).